A 122-amino-acid chain; its full sequence is MIQMQTTLDVADNTGARAVMCIKVLGGSKRRYAGIGDIIKVSVKDAAPRGRVKKGEIYNAVVVRTAKGVRRKDGSLIRFGGNAAVLLNAKLEPIGTRIFGPVTRELRTERFMKIVSLAPEVL.

It belongs to the universal ribosomal protein uL14 family. As to quaternary structure, part of the 50S ribosomal subunit. Forms a cluster with proteins L3 and L19. In the 70S ribosome, L14 and L19 interact and together make contacts with the 16S rRNA in bridges B5 and B8.

In terms of biological role, binds to 23S rRNA. Forms part of two intersubunit bridges in the 70S ribosome. The sequence is that of Large ribosomal subunit protein uL14 from Bordetella parapertussis (strain 12822 / ATCC BAA-587 / NCTC 13253).